The sequence spans 239 residues: Probable plastid-lipid-associated protein 8, chloroplastic (239 aa).

The N-terminal 52 residues, 1–52 (MAATASSLTIASSFSEPRTQIHSSRRLNLPLQYSIPYKVLRSRSRRLGLVVS), are a transit peptide targeting the chloroplast. Serine 53 is modified (N-acetylserine).

Belongs to the PAP/fibrillin family.

The protein localises to the plastid. It is found in the chloroplast. The chain is Probable plastid-lipid-associated protein 8, chloroplastic (PAP8) from Arabidopsis thaliana (Mouse-ear cress).